A 109-amino-acid polypeptide reads, in one-letter code: ATP-dependent Clp protease adapter protein ClpS (109 aa).

The segment at 1-25 is disordered; that stretch reads MSERKEGDSGAGVRSAVITQTKPKT.

Belongs to the ClpS family. Binds to the N-terminal domain of the chaperone ClpA.

Its function is as follows. Involved in the modulation of the specificity of the ClpAP-mediated ATP-dependent protein degradation. The polypeptide is ATP-dependent Clp protease adapter protein ClpS (Phenylobacterium zucineum (strain HLK1)).